Here is a 1342-residue protein sequence, read N- to C-terminus: DNA-directed RNA polymerase subunit beta (1342 aa).

The protein belongs to the RNA polymerase beta chain family. In terms of assembly, the RNAP catalytic core consists of 2 alpha, 1 beta, 1 beta' and 1 omega subunit. When a sigma factor is associated with the core the holoenzyme is formed, which can initiate transcription.

The catalysed reaction is RNA(n) + a ribonucleoside 5'-triphosphate = RNA(n+1) + diphosphate. Its function is as follows. DNA-dependent RNA polymerase catalyzes the transcription of DNA into RNA using the four ribonucleoside triphosphates as substrates. This Actinobacillus pleuropneumoniae serotype 5b (strain L20) protein is DNA-directed RNA polymerase subunit beta.